Reading from the N-terminus, the 560-residue chain is Serine palmitoyltransferase 2 (560 aa).

A helical membrane pass occupies residues 65 to 85 (PMLVAVLTYVGYGVLTLFGYL). Residue lysine 377 is modified to N6-(pyridoxal phosphate)lysine.

This sequence belongs to the class-II pyridoxal-phosphate-dependent aminotransferase family. Component of the serine palmitoyltransferase (SPT) complex, which is composed of SPTLC1, SPTLC2 or SPTLC3 and SPTSSA or SPTSSB. The heterodimer consisting of SPTLC1 and SPTLC2/SPTLC3 forms the catalytic core of the enzyme, while SPTSSA or SPTSSB subunits determine substrate specificity. SPT also interacts with ORMDL proteins, especially ORMDL3, which negatively regulate SPT activity in the presence of ceramides. Forms dimers of heterodimers with SPTLC1. Pyridoxal 5'-phosphate is required as a cofactor. In terms of tissue distribution, expressed in a variety of tissues. Expressed in brains cortices (at protein level). Expressed in brown and white adipose tissues. Expressed in liver.

The protein resides in the endoplasmic reticulum membrane. It carries out the reaction L-serine + hexadecanoyl-CoA + H(+) = 3-oxosphinganine + CO2 + CoA. The catalysed reaction is octadecanoyl-CoA + L-serine + H(+) = 3-oxoeicosasphinganine + CO2 + CoA. Its pathway is lipid metabolism; sphingolipid metabolism. SPT complex catalytic activity is negatively regulated by ORMDL proteins, including ORMDL3, in the presence of ceramides. This mechanism allows to maintain ceramide levels at sufficient concentrations for the production of complex sphingolipids, but which prevents the accumulation of ceramides to levels that trigger apoptosis. Its function is as follows. Component of the serine palmitoyltransferase multisubunit enzyme (SPT) that catalyzes the initial and rate-limiting step in sphingolipid biosynthesis by condensing L-serine and activated acyl-CoA (most commonly palmitoyl-CoA) to form long-chain bases. The SPT complex is composed of SPTLC1, SPTLC2 or SPTLC3 and SPTSSA or SPTSSB. Within this complex, the heterodimer consisting of SPTLC1 and SPTLC2/SPTLC3 forms the catalytic core. The composition of the serine palmitoyltransferase (SPT) complex determines the substrate preference. The SPTLC1-SPTLC2-SPTSSA complex shows a strong preference for C16-CoA substrate, while the SPTLC1-SPTLC3-SPTSSA isozyme uses both C14-CoA and C16-CoA as substrates, with a slight preference for C14-CoA. The SPTLC1-SPTLC2-SPTSSB complex shows a strong preference for C18-CoA substrate, while the SPTLC1-SPTLC3-SPTSSB isozyme displays an ability to use a broader range of acyl-CoAs, without apparent preference. Crucial for adipogenesis. This is Serine palmitoyltransferase 2 from Mus musculus (Mouse).